Here is a 199-residue protein sequence, read N- to C-terminus: Large ribosomal subunit protein bL25 (199 aa).

The protein belongs to the bacterial ribosomal protein bL25 family. CTC subfamily. Part of the 50S ribosomal subunit; part of the 5S rRNA/L5/L18/L25 subcomplex. Contacts the 5S rRNA. Binds to the 5S rRNA independently of L5 and L18.

Its function is as follows. This is one of the proteins that binds to the 5S RNA in the ribosome where it forms part of the central protuberance. The protein is Large ribosomal subunit protein bL25 of Caldanaerobacter subterraneus subsp. tengcongensis (strain DSM 15242 / JCM 11007 / NBRC 100824 / MB4) (Thermoanaerobacter tengcongensis).